A 78-amino-acid polypeptide reads, in one-letter code: MIIPWQQVDSETLDNLLEAFVLREGTDYGEHERSLTEKVADVRRQLVSGEAVLVWSELHETINIMPRGSFRAGAEEQQ.

Belongs to the UPF0270 family.

This Yersinia pestis protein is UPF0270 protein YPO0179/y3960/YP_0178.